Consider the following 728-residue polypeptide: Ribosome biogenesis protein bop1-A (728 aa).

Residues 1–114 (MKRGSQGEAG…ENDSSDEEDI (114 aa)) are disordered. Residues 55–67 (SDDEEDHWSEEEE) are compositionally biased toward acidic residues. Basic and acidic residues predominate over residues 68–77 (NPGKSPKEII). WD repeat units follow at residues 393-432 (GHKD…CMKS), 434-474 (VLEG…RLLC), 514-556 (KHQK…SQNP), 559-597 (KNKG…LTKK), 600-639 (TNCK…KPYK), 643-682 (HHKK…DLLQ), and 698-728 (HRDL…RLFT).

It belongs to the WD repeat BOP1/ERB1 family. In terms of assembly, component of the PeBoW complex, composed of bop1, pes1 and wdr12. The complex is held together by bop1, which interacts with pes1 via its N-terminal domain and with wdr12 via a high-affinity interaction between the seven-bladed beta-propeller domains of the 2 proteins. The PeBoW complex associates with the 66S pre-ribosome.

The protein resides in the nucleus. It localises to the nucleolus. The protein localises to the nucleoplasm. Its function is as follows. Component of the PeBoW complex, which is required for maturation of 28S and 5.8S ribosomal RNAs and formation of the 60S ribosome. This chain is Ribosome biogenesis protein bop1-A (bop1-a), found in Xenopus laevis (African clawed frog).